The sequence spans 224 residues: LexA repressor (224 aa).

Residues 41 to 61 constitute a DNA-binding region (H-T-H motif); sequence MREIGDAVGLSSLSSVTHQLN. Catalysis depends on for autocatalytic cleavage activity residues serine 148 and lysine 185.

This sequence belongs to the peptidase S24 family. Homodimer.

The catalysed reaction is Hydrolysis of Ala-|-Gly bond in repressor LexA.. Represses a number of genes involved in the response to DNA damage (SOS response), including recA and lexA. In the presence of single-stranded DNA, RecA interacts with LexA causing an autocatalytic cleavage which disrupts the DNA-binding part of LexA, leading to derepression of the SOS regulon and eventually DNA repair. This is LexA repressor from Leifsonia xyli subsp. xyli (strain CTCB07).